Reading from the N-terminus, the 541-residue chain is Chaperonin GroEL (541 aa).

ATP-binding positions include 29 to 32 (TLGP), 86 to 90 (DGTTT), Gly413, and Asp495.

It belongs to the chaperonin (HSP60) family. As to quaternary structure, forms a cylinder of 14 subunits composed of two heptameric rings stacked back-to-back. Interacts with the co-chaperonin GroES.

The protein localises to the cytoplasm. The catalysed reaction is ATP + H2O + a folded polypeptide = ADP + phosphate + an unfolded polypeptide.. Together with its co-chaperonin GroES, plays an essential role in assisting protein folding. The GroEL-GroES system forms a nano-cage that allows encapsulation of the non-native substrate proteins and provides a physical environment optimized to promote and accelerate protein folding. This Thermoanaerobacter pseudethanolicus (strain ATCC 33223 / 39E) (Clostridium thermohydrosulfuricum) protein is Chaperonin GroEL.